A 70-amino-acid chain; its full sequence is uncharacterized protein (70 aa).

It is found in the plastid. Its subcellular location is the chloroplast. This is an uncharacterized protein from Mesostigma viride (Green alga).